The chain runs to 396 residues: Elongation factor Tu (396 aa).

Residues 10–205 (KPHVNIGTIG…ACDDNIPDPV (196 aa)) form the tr-type G domain. Residues 19 to 26 (GHVDHGKT) form a G1 region. 19-26 (GHVDHGKT) is a binding site for GTP. Residue T26 participates in Mg(2+) binding. The segment at 62-66 (GITIN) is G2. The G3 stretch occupies residues 83–86 (DAPG). GTP-binding positions include 83–87 (DAPGH) and 138–141 (NKCD). The tract at residues 138-141 (NKCD) is G4. The interval 175-177 (SAL) is G5.

Belongs to the TRAFAC class translation factor GTPase superfamily. Classic translation factor GTPase family. EF-Tu/EF-1A subfamily. Monomer.

The protein resides in the cytoplasm. It carries out the reaction GTP + H2O = GDP + phosphate + H(+). Its function is as follows. GTP hydrolase that promotes the GTP-dependent binding of aminoacyl-tRNA to the A-site of ribosomes during protein biosynthesis. The polypeptide is Elongation factor Tu (Corynebacterium efficiens (strain DSM 44549 / YS-314 / AJ 12310 / JCM 11189 / NBRC 100395)).